The primary structure comprises 556 residues: Arginine--tRNA ligase (556 aa).

Positions 132-142 (ANPTGDLHLGH) match the 'HIGH' region motif.

This sequence belongs to the class-I aminoacyl-tRNA synthetase family. In terms of assembly, monomer.

Its subcellular location is the cytoplasm. The catalysed reaction is tRNA(Arg) + L-arginine + ATP = L-arginyl-tRNA(Arg) + AMP + diphosphate. The polypeptide is Arginine--tRNA ligase (Shouchella clausii (strain KSM-K16) (Alkalihalobacillus clausii)).